A 141-amino-acid chain; its full sequence is Large ribosomal subunit protein uL11 (141 aa).

It belongs to the universal ribosomal protein uL11 family. In terms of assembly, part of the ribosomal stalk of the 50S ribosomal subunit. Interacts with L10 and the large rRNA to form the base of the stalk. L10 forms an elongated spine to which L12 dimers bind in a sequential fashion forming a multimeric L10(L12)X complex. One or more lysine residues are methylated.

Functionally, forms part of the ribosomal stalk which helps the ribosome interact with GTP-bound translation factors. This is Large ribosomal subunit protein uL11 from Prochlorococcus marinus (strain SARG / CCMP1375 / SS120).